A 353-amino-acid polypeptide reads, in one-letter code: Cytochrome bc1 complex Rieske iron-sulfur subunit (353 aa).

The interval 1 to 51 (MSSQDIPEENLPAEQDRPHGAAARPADETNPFADPGLPPHEPRVQDVDERA) is disordered. Basic and acidic residues predominate over residues 40–51 (HEPRVQDVDERA). Transmembrane regions (helical) follow at residues 60–80 (ALLFTLSMLATIAFIAAFVAI), 99–119 (FALGMTLGVALFAIGAGAVHW), and 164–184 (LIRNTMLGALTLVPLSGVVLL). In terms of domain architecture, Rieske spans 246 to 336 (KAALMIIRLE…IGVNDEGYLE (91 aa)). Residues Cys-279, His-281, Cys-298, and His-301 each coordinate [2Fe-2S] cluster. Cysteines 284 and 300 form a disulfide.

It belongs to the Rieske iron-sulfur protein family. In terms of assembly, the cytochrome bc1 complex is composed of a cytochrome b (QcrB), the Rieske iron-sulfur protein (QcrA) and a diheme cytochrome c (QcrC) subunit. It depends on [2Fe-2S] cluster as a cofactor.

Its subcellular location is the cell membrane. Its function is as follows. Iron-sulfur subunit of the cytochrome bc1 complex, an essential component of the respiratory electron transport chain required for ATP synthesis. The bc1 complex catalyzes the oxidation of menaquinol and the reduction of cytochrome c in the respiratory chain. The bc1 complex operates through a Q-cycle mechanism that couples electron transfer to generation of the proton gradient that drives ATP synthesis. The protein is Cytochrome bc1 complex Rieske iron-sulfur subunit (qcrA) of Streptomyces coelicolor (strain ATCC BAA-471 / A3(2) / M145).